We begin with the raw amino-acid sequence, 274 residues long: Large ribosomal subunit protein uL2 (274 aa).

Residues 228–254 (VDHPMGGGEGRASGGHPRSRKGLYAKG) form a disordered region. A compositionally biased stretch (basic residues) spans 244–254 (PRSRKGLYAKG).

It belongs to the universal ribosomal protein uL2 family. Part of the 50S ribosomal subunit. Forms a bridge to the 30S subunit in the 70S ribosome.

In terms of biological role, one of the primary rRNA binding proteins. Required for association of the 30S and 50S subunits to form the 70S ribosome, for tRNA binding and peptide bond formation. It has been suggested to have peptidyltransferase activity; this is somewhat controversial. Makes several contacts with the 16S rRNA in the 70S ribosome. This chain is Large ribosomal subunit protein uL2, found in Azobacteroides pseudotrichonymphae genomovar. CFP2.